The following is a 209-amino-acid chain: Mitotic spindle checkpoint protein MAD2 (209 aa).

One can recognise an HORMA domain in the interval 15 to 198 (HGSAAIVSEF…TKIHKVDTLV (184 aa)).

The protein belongs to the MAD2 family. Part of the mitotic checkpoint complex (MCC); interacts with MAD1, CDC20-1, CDC20-2 and CDC20-5. Interacts with BUBR1 at chromocenters and with BUB3.1. Interacts with EIF4B3. As to expression, expressed in actively dividing tissues, early in organ development, in young leaves, lateral root primordia and root meristems.

It localises to the nucleus. The protein resides in the nucleus envelope. It is found in the chromosome. The protein localises to the centromere. Its subcellular location is the kinetochore. It localises to the cytoplasm. The protein resides in the cytoskeleton. It is found in the spindle. Its function is as follows. Required for the execution of the mitotic checkpoint which monitors the process of kinetochore-spindle attachment and delays the onset of anaphase when this process is not complete. It inhibits the activity of the anaphase promoting complex by sequestering CDC20 until all chromosomes are aligned at the metaphase plate. The polypeptide is Mitotic spindle checkpoint protein MAD2 (Arabidopsis thaliana (Mouse-ear cress)).